The following is a 544-amino-acid chain: BTB/POZ domain-containing protein At2g13690 (544 aa).

2 disordered regions span residues 34–66 and 82–111; these read ASPD…PQSS and LSPG…EEDD. The span at 37–55 shows a compositional bias: polar residues; the sequence is DTRSISSRNHIPAKSQQQR. Over residues 93–103 the composition is skewed to low complexity; it reads DPTVTTMQETE. The 84-residue stretch at 142–225 folds into the BTB domain; it reads YDARLSLKGR…MFEESNVIIK (84 aa).

It participates in protein modification; protein ubiquitination. Its function is as follows. May act as a substrate-specific adapter of an E3 ubiquitin-protein ligase complex (CUL3-RBX1-BTB) which mediates the ubiquitination and subsequent proteasomal degradation of target proteins. The chain is BTB/POZ domain-containing protein At2g13690 (PRL1-IFG) from Arabidopsis thaliana (Mouse-ear cress).